The following is an 85-amino-acid chain: Small ribosomal subunit protein bS16 (85 aa).

It belongs to the bacterial ribosomal protein bS16 family.

The chain is Small ribosomal subunit protein bS16 from Buchnera aphidicola subsp. Schizaphis graminum (strain Sg).